The following is a 321-amino-acid chain: Probable 1-aminocyclopropane-1-carboxylate oxidase (321 aa).

Positions proline 159–proline 259 constitute a Fe2OG dioxygenase domain. Fe cation-binding residues include histidine 183, aspartate 185, and histidine 240.

The protein belongs to the iron/ascorbate-dependent oxidoreductase family. Requires Fe cation as cofactor.

The catalysed reaction is 1-aminocyclopropane-1-carboxylate + L-ascorbate + O2 = ethene + L-dehydroascorbate + hydrogen cyanide + CO2 + 2 H2O. It functions in the pathway alkene biosynthesis; ethylene biosynthesis via S-adenosyl-L-methionine; ethylene from S-adenosyl-L-methionine: step 2/2. The sequence is that of Probable 1-aminocyclopropane-1-carboxylate oxidase (ACO) from Dianthus caryophyllus (Carnation).